The following is a 101-amino-acid chain: Small ribosomal subunit protein uS14 (101 aa).

A compositionally biased stretch (basic and acidic residues) spans 1 to 10; sequence MAKKSSIEKN. The tract at residues 1 to 24 is disordered; it reads MAKKSSIEKNNRRKRLTKNAAPKR. Residues 11-24 show a composition bias toward basic residues; the sequence is NRRKRLTKNAAPKR.

The protein belongs to the universal ribosomal protein uS14 family. In terms of assembly, part of the 30S ribosomal subunit. Contacts proteins S3 and S10.

Its function is as follows. Binds 16S rRNA, required for the assembly of 30S particles and may also be responsible for determining the conformation of the 16S rRNA at the A site. The chain is Small ribosomal subunit protein uS14 from Rhodopseudomonas palustris (strain BisB18).